The primary structure comprises 419 residues: Cytosine permease (419 aa).

The Cytoplasmic portion of the chain corresponds to M1 to G19. A helical transmembrane segment spans residues V20–T39. Residues G40–D51 are Periplasmic-facing. The helical transmembrane segment at F52 to G71 threads the bilayer. Over Y72 to L100 the chain is Cytoplasmic. The chain crosses the membrane as a helical span at residues L101–V120. Topologically, residues G121 to D127 are periplasmic. A helical membrane pass occupies residues I128 to I147. Over S148–V152 the chain is Cytoplasmic. A helical transmembrane segment spans residues L153–A172. Residues V173–D192 lie on the Periplasmic side of the membrane. Residues F193–A212 form a helical membrane-spanning segment. The Cytoplasmic portion of the chain corresponds to D213–A221. Residues K222–F242 form a helical membrane-spanning segment. The Periplasmic portion of the chain corresponds to G243–D257. The helical transmembrane segment at V258–W277 threads the bilayer. Topologically, residues T278 to K300 are cytoplasmic. Residues T301 to N320 traverse the membrane as a helical segment. F321 is a topological domain (periplasmic). Residues V322–A341 traverse the membrane as a helical segment. Topologically, residues D342 to M358 are cytoplasmic. A helical membrane pass occupies residues M359 to W378. The Periplasmic portion of the chain corresponds to L379–P380. Residues G381–P400 traverse the membrane as a helical segment. Residues I401 to E419 lie on the Cytoplasmic side of the membrane.

It belongs to the purine-cytosine permease (2.A.39) family.

It is found in the cell inner membrane. Functionally, required for cytosine transport into the cell. This chain is Cytosine permease (codB), found in Escherichia coli O6:H1 (strain CFT073 / ATCC 700928 / UPEC).